The sequence spans 147 residues: MKLVLQRVKEASVSIDGKIAGAINQGLLLLVGVGPDDNAEDLAYAVRKIVNMRIFSDADGKMNQSIQDIKGSILSVSQFTLYADTKKGNRPAFTGAAKPDLARQLYDSFNEQLAEFVPVERGVFGADMQVSLINDGPVTIILDTKCH.

The short motif at 136-137 (GP) is the Gly-cisPro motif, important for rejection of L-amino acids element.

It belongs to the DTD family. In terms of assembly, homodimer.

The protein localises to the cytoplasm. The catalysed reaction is glycyl-tRNA(Ala) + H2O = tRNA(Ala) + glycine + H(+). It carries out the reaction a D-aminoacyl-tRNA + H2O = a tRNA + a D-alpha-amino acid + H(+). In terms of biological role, an aminoacyl-tRNA editing enzyme that deacylates mischarged D-aminoacyl-tRNAs. Also deacylates mischarged glycyl-tRNA(Ala), protecting cells against glycine mischarging by AlaRS. Acts via tRNA-based rather than protein-based catalysis; rejects L-amino acids rather than detecting D-amino acids in the active site. By recycling D-aminoacyl-tRNA to D-amino acids and free tRNA molecules, this enzyme counteracts the toxicity associated with the formation of D-aminoacyl-tRNA entities in vivo and helps enforce protein L-homochirality. The chain is D-aminoacyl-tRNA deacylase from Streptococcus pyogenes serotype M6 (strain ATCC BAA-946 / MGAS10394).